The primary structure comprises 92 residues: Sugar fermentation stimulation protein B (92 aa).

Residues 50–69 (EMIIAKALGTDPWVIWPSRY) constitute a DNA-binding region (H-T-H motif).

It belongs to the ner transcriptional regulatory family.

Functionally, this protein is involved in positive regulation of the metabolism of sugars. The polypeptide is Sugar fermentation stimulation protein B (sfsB) (Escherichia coli O157:H7).